A 590-amino-acid chain; its full sequence is Oleate hydratase (590 aa).

The FAD site is built by alanine 33, glutamate 56, serine 64, and glutamate 82. The active-site Proton acceptor is the glutamate 82. Tyrosine 200 acts as the Proton donor in catalysis. FAD-binding residues include valine 249, serine 291, threonine 508, and serine 512.

This sequence belongs to the oleate hydratase family. In terms of assembly, monomer and homodimer. Both forms seem to be active. FAD serves as cofactor.

The catalysed reaction is (R)-10-hydroxyoctadecanoate = (9Z)-octadecenoate + H2O. It carries out the reaction (9Z)-octadecenoate + H2O = 10-hydroxyoctadecanoate. It catalyses the reaction (9Z)-hexadecenoate + H2O = 10-hydroxyhexadecanoate. The enzyme catalyses (9Z,12Z)-octadecadienoate + H2O = (12Z)-10-hydroxyoctadecenoate. The catalysed reaction is (12Z)-10-hydroxyoctadecenoate + H2O = 10,13-dihydroxyoctadecanoate. It carries out the reaction (9Z,12Z,15Z)-octadecatrienoate + H2O = (12Z,15Z)-10-hydroxyoctadecadienoate. It participates in lipid metabolism; fatty acid metabolism. Its function is as follows. Catalyzes the hydration of oleate at its cis-9-double bond to yield 10-hydroxyoctadecanoate, probably in the (R) configuration, and of linoleate at its cis-9- and cis-12-double bond to yield 10-hydroxy-12-octadecenoate and 10,13-dihydroxyoctadecanoate. Is not active on trans-double bonds and esterified fatty acids as substrate; is only active on cis-9- and/or cis-12-double bond of C16 and C18 fatty acids without any trans-configurations, producing 10-hydroxy and 10,13-dihydroxy derivatives. Appears to play a role in oleic acid detoxification and bacterial virulence. The sequence is that of Oleate hydratase (sph) from Streptococcus pyogenes serotype M49 (strain NZ131).